We begin with the raw amino-acid sequence, 404 residues long: Formate-dependent phosphoribosylglycinamide formyltransferase (404 aa).

Residues 25 to 26 (EL) and glutamate 85 contribute to the N(1)-(5-phospho-beta-D-ribosyl)glycinamide site. ATP-binding positions include arginine 118, lysine 159, 164–169 (SSGKGQ), 199–202 (EGFI), and glutamate 207. In terms of domain architecture, ATP-grasp spans 123–318 (RLAAEELGLA…EFELHARAIL (196 aa)). Positions 277 and 289 each coordinate Mg(2+). Residues aspartate 296, lysine 365, and 372–373 (RR) contribute to the N(1)-(5-phospho-beta-D-ribosyl)glycinamide site.

It belongs to the PurK/PurT family. Homodimer.

It catalyses the reaction N(1)-(5-phospho-beta-D-ribosyl)glycinamide + formate + ATP = N(2)-formyl-N(1)-(5-phospho-beta-D-ribosyl)glycinamide + ADP + phosphate + H(+). It participates in purine metabolism; IMP biosynthesis via de novo pathway; N(2)-formyl-N(1)-(5-phospho-D-ribosyl)glycinamide from N(1)-(5-phospho-D-ribosyl)glycinamide (formate route): step 1/1. Functionally, involved in the de novo purine biosynthesis. Catalyzes the transfer of formate to 5-phospho-ribosyl-glycinamide (GAR), producing 5-phospho-ribosyl-N-formylglycinamide (FGAR). Formate is provided by PurU via hydrolysis of 10-formyl-tetrahydrofolate. The protein is Formate-dependent phosphoribosylglycinamide formyltransferase of Burkholderia vietnamiensis (strain G4 / LMG 22486) (Burkholderia cepacia (strain R1808)).